A 104-amino-acid polypeptide reads, in one-letter code: Large ribosomal subunit protein uL24 (104 aa).

The protein belongs to the universal ribosomal protein uL24 family. Part of the 50S ribosomal subunit.

Functionally, one of two assembly initiator proteins, it binds directly to the 5'-end of the 23S rRNA, where it nucleates assembly of the 50S subunit. Its function is as follows. One of the proteins that surrounds the polypeptide exit tunnel on the outside of the subunit. The polypeptide is Large ribosomal subunit protein uL24 (Pseudoalteromonas atlantica (strain T6c / ATCC BAA-1087)).